The chain runs to 361 residues: MKAKVIVGMSGGVDSSVAAWLLKEQGYQVEGLFMKNWEQDDHNDYCPAAKDLADAQAVCNQLRIPLHTVNFSKEYWDRVFAYFLSEYEKGRTPNPDVLCNKEIKFNAFLNHALTLGADYIATGHYAKNTIEGSIGYLFKAKDREKDQTYFLHAVEPEALSKTIFPIGDFTKPQIREFAKQLGLVTHAKKDSTGICFIGEKRFKTFLNEFILAKPGEIKSTGGKTLGQHDGLMFYTLGQRQGLGIGGLQNSTDEPWYVVDKDIASNTLYVAQGSQHPMLYSQGLICGPIHWLADYENHLPLTCFAKTRYRQTDQACMISPPDNNQHYVMFSSPQRAITPGQFIVFYEKNQCLGGATIEQIIR.

ATP contacts are provided by residues 8-15 (GMSGGVDS) and methionine 34. Residues 94 to 96 (NPD) form an interaction with target base in tRNA region. Catalysis depends on cysteine 99, which acts as the Nucleophile. The cysteines at positions 99 and 195 are disulfide-linked. Position 123 (glycine 123) interacts with ATP. An interaction with tRNA region spans residues 145 to 147 (KDQ). Cysteine 195 serves as the catalytic Cysteine persulfide intermediate. The tract at residues 307-308 (RY) is interaction with tRNA.

It belongs to the MnmA/TRMU family.

Its subcellular location is the cytoplasm. The catalysed reaction is S-sulfanyl-L-cysteinyl-[protein] + uridine(34) in tRNA + AH2 + ATP = 2-thiouridine(34) in tRNA + L-cysteinyl-[protein] + A + AMP + diphosphate + H(+). In terms of biological role, catalyzes the 2-thiolation of uridine at the wobble position (U34) of tRNA, leading to the formation of s(2)U34. The sequence is that of tRNA-specific 2-thiouridylase MnmA from Legionella pneumophila subsp. pneumophila (strain Philadelphia 1 / ATCC 33152 / DSM 7513).